A 132-amino-acid polypeptide reads, in one-letter code: Small ribosomal subunit protein uS8 (132 aa).

Belongs to the universal ribosomal protein uS8 family. As to quaternary structure, part of the 30S ribosomal subunit. Contacts proteins S5 and S12.

In terms of biological role, one of the primary rRNA binding proteins, it binds directly to 16S rRNA central domain where it helps coordinate assembly of the platform of the 30S subunit. This is Small ribosomal subunit protein uS8 from Streptococcus agalactiae serotype Ia (strain ATCC 27591 / A909 / CDC SS700).